Consider the following 344-residue polypeptide: Fructose-1,6-bisphosphatase class 1 (344 aa).

Mg(2+) contacts are provided by glutamate 91, aspartate 110, leucine 112, and aspartate 113. Residues 113-116 (DGSS) and asparagine 200 contribute to the substrate site. Glutamate 272 contributes to the Mg(2+) binding site.

The protein belongs to the FBPase class 1 family. As to quaternary structure, homotetramer. It depends on Mg(2+) as a cofactor.

Its subcellular location is the cytoplasm. The catalysed reaction is beta-D-fructose 1,6-bisphosphate + H2O = beta-D-fructose 6-phosphate + phosphate. It participates in carbohydrate biosynthesis; Calvin cycle. This chain is Fructose-1,6-bisphosphatase class 1, found in Rhodopseudomonas palustris (strain BisA53).